An 805-amino-acid chain; its full sequence is Leucine--tRNA ligase (805 aa).

Positions 40–51 (PYPSGAGLHVGH) match the 'HIGH' region motif. A 'KMSKS' region motif is present at residues 576–580 (KMSKS). K579 lines the ATP pocket.

This sequence belongs to the class-I aminoacyl-tRNA synthetase family.

The protein resides in the cytoplasm. The enzyme catalyses tRNA(Leu) + L-leucine + ATP = L-leucyl-tRNA(Leu) + AMP + diphosphate. The protein is Leucine--tRNA ligase of Geobacillus thermodenitrificans (strain NG80-2).